A 919-amino-acid polypeptide reads, in one-letter code: Hexon protein (919 aa).

Position 2 is an N-acetylalanine; by host (alanine 2). A Phosphotyrosine; by host modification is found at tyrosine 907.

The protein belongs to the adenoviridae hexon protein family. In terms of assembly, homotrimer. Interacts with the capsid vertex protein; this interaction binds the peripentonal hexons to the neighboring penton base. Interacts with the hexon-linking protein; this interaction tethers the hexons surrounding the penton to those situated in the central plate of the facet. Interacts with the hexon-interlacing protein; this interaction lashes the hexons together. Interacts with host dyneins DYNC1LI1 and DYNC1I2; this interaction might be involved in intracellular microtubule-dependent transport of incoming viral capsid. Interacts with the shutoff protein; this interaction allows folding and formation of hexons trimers. Interacts with pre-protein VI; this interaction probably allows nuclear import of hexon trimers and possibly pre-capsid assembly.

It is found in the virion. Its subcellular location is the host nucleus. Major capsid protein that self-associates to form 240 hexon trimers, each in the shape of a hexagon, building most of the pseudo T=25 capsid. Assembled into trimeric units with the help of the chaperone shutoff protein. Transported by pre-protein VI to the nucleus where it associates with other structural proteins to form an empty capsid. Might be involved, through its interaction with host dyneins, in the intracellular microtubule-dependent transport of incoming viral capsid to the nucleus. This Human adenovirus A serotype 12 (HAdV-12) protein is Hexon protein.